The chain runs to 645 residues: Protein hrpC2 (645 aa).

7 helical membrane passes run 18-34, 43-59, 108-124, 201-217, 243-259, 285-301, and 308-324; these read VAIA…MILP, LLGI…MVTM, LVVG…FLII, IAGL…GIVV, VSQI…GVMI, ARAL…FAFV, and LFLL…YTIW. The disordered stretch occupies residues 334–354; sequence DQRKLPSASRKGAKGEAPHIR.

The protein belongs to the FHIPEP (flagella/HR/invasion proteins export pore) family.

It is found in the cell inner membrane. Involved in the secretion of a proteinaceous elicitor of the hypersensitivity response in plants. The sequence is that of Protein hrpC2 (hrpC2) from Xanthomonas euvesicatoria.